The sequence spans 334 residues: tRNA methyltransferase 10 homolog A (334 aa).

Disordered regions lie at residues 1–101 (MSLE…SRKR) and 290–334 (PLTE…EQNS). A compositionally biased stretch (polar residues) spans 26–40 (HAGNNTPLQENSSAP). A coiled-coil region spans residues 62–94 (KQWEDQRELRKQKRKEKRQKRKLERQAQAEHNI). Over residues 71–84 (RKQKRKEKRQKRKL) the composition is skewed to basic residues. Residues 85 to 98 (ERQAQAEHNIDANS) show a composition bias toward basic and acidic residues. The 192-residue stretch at 98-289 (SRKRFRHEVQ…SVLPQRKGAI (192 aa)) folds into the SAM-dependent MTase TRM10-type domain. The segment covering 305–317 (QEDGEDSDSDSSI) has biased composition (acidic residues).

This sequence belongs to the class IV-like SAM-binding methyltransferase superfamily. TRM10 family.

It carries out the reaction guanosine(9) in tRNA + S-adenosyl-L-methionine = N(1)-methylguanosine(9) in tRNA + S-adenosyl-L-homocysteine + H(+). In terms of biological role, S-adenosyl-L-methionine-dependent guanine N(1)-methyltransferase that catalyzes the formation of N(1)-methylguanine at position 9 (m1G9) in tRNAs. Probably not able to catalyze formation of N(1)-methyladenine at position 9 (m1A9) in tRNAs. This chain is tRNA methyltransferase 10 homolog A (trmt10a), found in Xenopus tropicalis (Western clawed frog).